Here is a 268-residue protein sequence, read N- to C-terminus: Ubiquinone/menaquinone biosynthesis C-methyltransferase UbiE (268 aa).

The interval Met1–Glu23 is disordered. The segment covering Glu10 to Glu23 has biased composition (polar residues). S-adenosyl-L-methionine-binding positions include Thr91, Asp112, Asn140–Ala141, and Ser157.

Belongs to the class I-like SAM-binding methyltransferase superfamily. MenG/UbiE family.

It catalyses the reaction a 2-demethylmenaquinol + S-adenosyl-L-methionine = a menaquinol + S-adenosyl-L-homocysteine + H(+). It carries out the reaction a 2-methoxy-6-(all-trans-polyprenyl)benzene-1,4-diol + S-adenosyl-L-methionine = a 5-methoxy-2-methyl-3-(all-trans-polyprenyl)benzene-1,4-diol + S-adenosyl-L-homocysteine + H(+). It participates in quinol/quinone metabolism; menaquinone biosynthesis; menaquinol from 1,4-dihydroxy-2-naphthoate: step 2/2. The protein operates within cofactor biosynthesis; ubiquinone biosynthesis. In terms of biological role, methyltransferase required for the conversion of demethylmenaquinol (DMKH2) to menaquinol (MKH2) and the conversion of 2-polyprenyl-6-methoxy-1,4-benzoquinol (DDMQH2) to 2-polyprenyl-3-methyl-6-methoxy-1,4-benzoquinol (DMQH2). In Pasteurella multocida (strain Pm70), this protein is Ubiquinone/menaquinone biosynthesis C-methyltransferase UbiE.